The following is a 601-amino-acid chain: Elongation factor 4 (601 aa).

The tr-type G domain occupies Gln-6 to Lys-188. GTP is bound by residues Asp-18–Thr-23 and Asn-135–Asp-138.

The protein belongs to the TRAFAC class translation factor GTPase superfamily. Classic translation factor GTPase family. LepA subfamily.

The protein localises to the cell inner membrane. It catalyses the reaction GTP + H2O = GDP + phosphate + H(+). Its function is as follows. Required for accurate and efficient protein synthesis under certain stress conditions. May act as a fidelity factor of the translation reaction, by catalyzing a one-codon backward translocation of tRNAs on improperly translocated ribosomes. Back-translocation proceeds from a post-translocation (POST) complex to a pre-translocation (PRE) complex, thus giving elongation factor G a second chance to translocate the tRNAs correctly. Binds to ribosomes in a GTP-dependent manner. This Leptospira borgpetersenii serovar Hardjo-bovis (strain JB197) protein is Elongation factor 4.